Here is a 138-residue protein sequence, read N- to C-terminus: MSGTLLAFDFGTKSIGVAIGQRITGTARPLPAIKAQDGTPDWTLIERLLKEWQPDEIIVGLPLNMDGTEQPLTARARKFANRIHGRFGVTVTLHDERLSTVEARSGLFERGGYRALNKGKVDSASAVIILESYFEQGY.

The protein belongs to the YqgF nuclease family.

The protein resides in the cytoplasm. Could be a nuclease involved in processing of the 5'-end of pre-16S rRNA. The protein is Putative pre-16S rRNA nuclease of Salmonella typhimurium (strain LT2 / SGSC1412 / ATCC 700720).